A 152-amino-acid chain; its full sequence is Prostaglandin E synthase (152 aa).

Residues 1–12 (MPAHSLAMSSPA) lie on the Lumenal side of the membrane. The helical transmembrane segment at 13–41 (LPAFLLCSTLLVIKMYVVAIITGQVRLRK) threads the bilayer. Arginine 38 serves as a coordination point for glutathione. Residues 42-60 (KAFANPEDALRHGGPQYCR) are Cytoplasmic-facing. The chain crosses the membrane as a helical span at residues 61–90 (SDPDVERCLRAHRNDMETIYPFLFLGFVYS). 73 to 77 (RNDME) is a glutathione binding site. Residues 91-95 (FLGPN) are Lumenal-facing. The chain crosses the membrane as a helical span at residues 96 to 119 (PFVAWMHFLVFLLGRVVHTVAYLG). Histidine 113 and tyrosine 117 together coordinate glutathione. The Cytoplasmic segment spans residues 120–123 (KLRA). Residues 124 to 152 (PIRSVTYTLAQLPCASMALQILWEAARHL) traverse the membrane as a helical segment. 126–130 (RSVTY) serves as a coordination point for glutathione.

It belongs to the MAPEG family. In terms of assembly, homotrimer. Glutathione serves as cofactor.

Its subcellular location is the membrane. It is found in the cytoplasm. It localises to the perinuclear region. The enzyme catalyses prostaglandin H2 = prostaglandin E2. It catalyses the reaction 2-glyceryl-prostaglandin H2 = 2-glyceryl-prostaglandin E2. It carries out the reaction prostaglandin G2 = (15S)-15-hydroperoxy-prostaglandin E2. The catalysed reaction is 1-chloro-2,4-dinitrobenzene + glutathione = 2,4-dinitrophenyl-S-glutathione + chloride + H(+). The enzyme catalyses (5S)-hydroperoxy-(6E,8Z,11Z,14Z)-eicosatetraenoate + 2 glutathione = (5S)-hydroxy-(6E,8Z,11Z,14Z)-eicosatetraenoate + glutathione disulfide + H2O. The protein operates within lipid metabolism; prostaglandin biosynthesis. In terms of biological role, terminal enzyme of the cyclooxygenase (COX)-2-mediated prostaglandin E2 (PGE2) biosynthetic pathway. Catalyzes the glutathione-dependent oxidoreduction of prostaglandin endoperoxide H2 (PGH2) to prostaglandin E2 (PGE2) in response to inflammatory stimuli. Plays a key role in inflammation response, fever and pain. Also catalyzes the oxidoreduction of endocannabinoids into prostaglandin glycerol esters and PGG2 into 15-hydroperoxy-PGE2. In addition, displays low glutathione transferase and glutathione-dependent peroxidase activities, toward 1-chloro-2,4-dinitrobenzene and 5-hydroperoxyicosatetraenoic acid (5-HPETE), respectively. This is Prostaglandin E synthase (PTGES) from Macaca fascicularis (Crab-eating macaque).